A 502-amino-acid chain; its full sequence is ATP synthase subunit alpha (502 aa).

The interval 115–135 (VDGLGPINTTNTRPIESPAPG) is disordered. 169–176 (GDRQTGKT) contributes to the ATP binding site.

It belongs to the ATPase alpha/beta chains family. In terms of assembly, F-type ATPases have 2 components, CF(1) - the catalytic core - and CF(0) - the membrane proton channel. CF(1) has five subunits: alpha(3), beta(3), gamma(1), delta(1), epsilon(1). CF(0) has three main subunits: a(1), b(2) and c(9-12). The alpha and beta chains form an alternating ring which encloses part of the gamma chain. CF(1) is attached to CF(0) by a central stalk formed by the gamma and epsilon chains, while a peripheral stalk is formed by the delta and b chains.

Its subcellular location is the cell membrane. It catalyses the reaction ATP + H2O + 4 H(+)(in) = ADP + phosphate + 5 H(+)(out). Produces ATP from ADP in the presence of a proton gradient across the membrane. The alpha chain is a regulatory subunit. This is ATP synthase subunit alpha from Bacillus mycoides (strain KBAB4) (Bacillus weihenstephanensis).